Here is a 476-residue protein sequence, read N- to C-terminus: Sulfate adenylyltransferase subunit 1 (476 aa).

One can recognise a tr-type G domain in the interval 24–238 (KSLLRFLTCG…ELLEYVDIDR (215 aa)). Residues 33–40 (GSVDDGKS) form a G1 region. 33–40 (GSVDDGKS) provides a ligand contact to GTP. The tract at residues 91–95 (GITID) is G2. Residues 112–115 (DTPG) are G3. GTP is bound by residues 112–116 (DTPGH) and 167–170 (NKMD). A G4 region spans residues 167-170 (NKMD). A G5 region spans residues 205 to 207 (SAL).

This sequence belongs to the TRAFAC class translation factor GTPase superfamily. Classic translation factor GTPase family. CysN/NodQ subfamily. Heterodimer composed of CysD, the smaller subunit, and CysN.

The catalysed reaction is sulfate + ATP + H(+) = adenosine 5'-phosphosulfate + diphosphate. It participates in sulfur metabolism; hydrogen sulfide biosynthesis; sulfite from sulfate: step 1/3. Its function is as follows. With CysD forms the ATP sulfurylase (ATPS) that catalyzes the adenylation of sulfate producing adenosine 5'-phosphosulfate (APS) and diphosphate, the first enzymatic step in sulfur assimilation pathway. APS synthesis involves the formation of a high-energy phosphoric-sulfuric acid anhydride bond driven by GTP hydrolysis by CysN coupled to ATP hydrolysis by CysD. The polypeptide is Sulfate adenylyltransferase subunit 1 (Vibrio cholerae serotype O1 (strain M66-2)).